Here is a 332-residue protein sequence, read N- to C-terminus: 2,3-diketo-L-gulonate reductase (332 aa).

The active-site Proton donor is H44. NAD(+)-binding positions include 168-174, 224-225, and 304-306; these read ITMVDMS, WK, and GHE.

It belongs to the LDH2/MDH2 oxidoreductase family. DlgD subfamily. In terms of assembly, homodimer.

It localises to the cytoplasm. It carries out the reaction 3-dehydro-L-gulonate + NAD(+) = 2,3-dioxo-L-gulonate + NADH + H(+). The enzyme catalyses 3-dehydro-L-gulonate + NADP(+) = 2,3-dioxo-L-gulonate + NADPH + H(+). Functionally, catalyzes the reduction of 2,3-diketo-L-gulonate in the presence of NADH, to form 3-keto-L-gulonate. The chain is 2,3-diketo-L-gulonate reductase from Salmonella heidelberg (strain SL476).